Here is a 347-residue protein sequence, read N- to C-terminus: Haptoglobin (347 aa).

The N-terminal stretch at Met1–Ala18 is a signal peptide. The region spanning Asp31–Ala88 is the Sushi domain. 4 cysteine pairs are disulfide-bonded: Cys52-Cys86, Cys90-Cys207, Cys250-Cys281, and Cys292-Cys322. The Peptidase S1 domain occupies Ile103–Ala345. Asn125, Asn148, Asn152, and Asn182 each carry an N-linked (GlcNAc...) asparagine glycan. The tract at residues Val259 to Thr264 is interaction with CD163.

Belongs to the peptidase S1 family. Tetramer of two alpha and two beta chains; disulfide-linked. The hemoglobin/haptoglobin complex is composed of a haptoglobin dimer bound to two hemoglobin alpha-beta dimers. Interacts with CD163. Interacts with ERGIC3. Expressed by the liver and secreted in plasma.

The protein localises to the secreted. Its function is as follows. As a result of hemolysis, hemoglobin is found to accumulate in the kidney and is secreted in the urine. Haptoglobin captures, and combines with free plasma hemoglobin to allow hepatic recycling of heme iron and to prevent kidney damage. Haptoglobin also acts as an antioxidant, has antibacterial activity and plays a role in modulating many aspects of the acute phase response. Hemoglobin/haptoglobin complexes are rapidly cleared by the macrophage CD163 scavenger receptor expressed on the surface of liver Kupfer cells through an endocytic lysosomal degradation pathway. In Ateles geoffroyi (Black-handed spider monkey), this protein is Haptoglobin (HP).